We begin with the raw amino-acid sequence, 254 residues long: 3-deoxy-manno-octulosonate cytidylyltransferase (254 aa).

This sequence belongs to the KdsB family.

The protein localises to the cytoplasm. It catalyses the reaction 3-deoxy-alpha-D-manno-oct-2-ulosonate + CTP = CMP-3-deoxy-beta-D-manno-octulosonate + diphosphate. The protein operates within nucleotide-sugar biosynthesis; CMP-3-deoxy-D-manno-octulosonate biosynthesis; CMP-3-deoxy-D-manno-octulosonate from 3-deoxy-D-manno-octulosonate and CTP: step 1/1. It participates in bacterial outer membrane biogenesis; lipopolysaccharide biosynthesis. Its function is as follows. Activates KDO (a required 8-carbon sugar) for incorporation into bacterial lipopolysaccharide in Gram-negative bacteria. This Ectopseudomonas mendocina (strain ymp) (Pseudomonas mendocina) protein is 3-deoxy-manno-octulosonate cytidylyltransferase.